A 337-amino-acid chain; its full sequence is 2-oxoglutarate receptor 1 (337 aa).

Topologically, residues 1-34 (MNEPLDYLANASDFPDYAAAFGNCTDENIPLKMH) are extracellular. N-linked (GlcNAc...) asparagine glycosylation is found at Asn10 and Asn23. A helical membrane pass occupies residues 35-55 (YLPVIYGIIFLVGFPGNAVVI). Topologically, residues 56-69 (STYIFKMRPWKSST) are cytoplasmic. A helical membrane pass occupies residues 70 to 90 (IIMLNLACTDLLYLTSLPFLI). Topologically, residues 91-116 (HYYASGENWIFGDFMCKFIRFSFHFN) are extracellular. Cys106 and Cys183 form a disulfide bridge. A helical membrane pass occupies residues 117–137 (LYSSILFLTCFSIFRYCVIIH). Residues 138–151 (PMSCFSIHKTRCAV) are Cytoplasmic-facing. A helical transmembrane segment spans residues 152–172 (VACAVVWIISLVAVIPMTFLI). The Extracellular segment spans residues 173–201 (TSTNRTNRSACLDLTSSDELNTIKWYNLI). Asn176 and Asn179 each carry an N-linked (GlcNAc...) asparagine glycan. A helical transmembrane segment spans residues 202-222 (LTATTFCLPLVIVTLCYTTII). At 223–242 (HTLTHGLQTDSCLKQKARRL) the chain is on the cytoplasmic side. Residues 243–263 (TILLLLAFYVCFLPFHILRVI) form a helical membrane-spanning segment. At 264-284 (RIESRLLSISCSIENQIHEAY) the chain is on the extracellular side. A helical transmembrane segment spans residues 285–305 (IVSRPLAALNTFGNLLLYVVV). The Cytoplasmic portion of the chain corresponds to 306 to 337 (SDNFQQAVCSTVRCKVSGNLEQAKKISYSNNP).

Belongs to the G-protein coupled receptor 1 family. Detected in kidney and, to a lower extent, in placenta. Not detected in brain tissues including the frontal cortex, caudate putamen, thalamus, hypothalamus, hippocampus or pons.

The protein resides in the cell membrane. Its function is as follows. G protein-coupled receptor for dicarboxylates and amino dicarboxylates. Receptor for itaconate, a metabolite produced by myeloid lineages. In the respiratory epithelium, couples the binding of itaconate to the activation of GNA11 and downstream intracellular Ca(2+) release, leading to mucocilliary clearance of airborne pathogens. Receptor for leukotriene E4 (LTE4) produced by mast cells upon allergic inflammation. Binds with high affinity to LTE4 and elicits mucin release from pulmonary epithelium in response to airborne fungi allergens. Regulates mucin-producing goblet cell homeostasis. Receptor for alpha-ketoglutarate produced by proximal tubule renal cells upon metabolic alkalosis. In an intrarenal paracrine signaling pathway, binds alpha-ketoglutarate and drives transepithelial salt reabsorption and bicarbonate secretion by SLC26A4/pendrin-positive intercalated cells. The protein is 2-oxoglutarate receptor 1 (OXGR1) of Homo sapiens (Human).